The sequence spans 796 residues: Ent-copalyl diphosphate synthase 4 (796 aa).

Residues 1–23 constitute a chloroplast transit peptide; the sequence is MSSSSIVTSLLRPTTAADGVLPR. Residue Lys240 participates in substrate binding. 2 residues coordinate Mg(2+): Asp371 and Asp373. The short motif at 371–374 is the DXDD motif element; that stretch reads DVDD. Position 457 (Lys457) interacts with substrate.

Belongs to the terpene synthase family. Tpsc subfamily. Requires Mg(2+) as cofactor. Highly expressed in leaves, and, at low levels, in stems, but barely in roots and flowers.

It localises to the plastid. It is found in the chloroplast. It catalyses the reaction (2E,6E,10E)-geranylgeranyl diphosphate = ent-copalyl diphosphate. It participates in secondary metabolite biosynthesis; terpenoid biosynthesis. In terms of biological role, involved in the biosynthesis of ent-kaurene diterpenoids natural products such as oridonin, miltiradiene, eriocalyxin B and nezukol, known to exhibit antitumor, anti-inflammatory and antibacterial activities. Catalyzes the conversion of (2E,6E,10E)-geranylgeranyl diphosphate (GGPP) to ent-copalyl diphosphate (ent-CPP). In Isodon rubescens (Rabdosia rubescens), this protein is Ent-copalyl diphosphate synthase 4.